We begin with the raw amino-acid sequence, 181 residues long: ATP-dependent protease subunit HslV (181 aa).

Residue Thr7 is part of the active site. Residues Gly164, Cys167, and Thr170 each coordinate Na(+).

Belongs to the peptidase T1B family. HslV subfamily. As to quaternary structure, a double ring-shaped homohexamer of HslV is capped on each side by a ring-shaped HslU homohexamer. The assembly of the HslU/HslV complex is dependent on binding of ATP.

It is found in the cytoplasm. The catalysed reaction is ATP-dependent cleavage of peptide bonds with broad specificity.. Its activity is regulated as follows. Allosterically activated by HslU binding. Protease subunit of a proteasome-like degradation complex believed to be a general protein degrading machinery. The sequence is that of ATP-dependent protease subunit HslV from Shouchella clausii (strain KSM-K16) (Alkalihalobacillus clausii).